The following is a 112-amino-acid chain: UPF0342 protein SUB0718 (112 aa).

The protein belongs to the UPF0342 family.

This chain is UPF0342 protein SUB0718, found in Streptococcus uberis (strain ATCC BAA-854 / 0140J).